Consider the following 442-residue polypeptide: MSEIGSYHDTIFALSSGRLPSGVAVIRISGPKTRFVYETICQAIPEPRHAALLTFRSRNGDAIDRGLTLFFPAPHSFTGEDCAEFHLHGGKAVVEKMLAVLGELPGCRIAEAGEFTRRAFANGKMDLTIAEGLADLIAAETEGQRRLAMQVASGNQRKLYSEWRQRLINARAFIEAELDFADESDVPGSVSMQVWQQLSALKHEIEHHIASGKRAAMLRDGLHVVIVGAPNAGKSSLLNFLAGRDVAIISEEAGTTRDLLEVKLDLGGIPVYVTDTAGLRETDSVVEKIGIERARARMAEADLVLSLEDMSGPVSVTVEKIEAETWLIGTKADLGGSASGLWKYHISTMTGSGLEQLLDALQAFAEAKIGQIEDAVPTRQRHINLLRATIEEIEKAIEGDDLPLELRAENMRLASQFLGRITGDVDVEEILDVMFSQFCIGK.

(6S)-5-formyl-5,6,7,8-tetrahydrofolate contacts are provided by arginine 27, glutamate 84, and lysine 124. The TrmE-type G domain occupies 221 to 366; it reads GLHVVIVGAP…LLDALQAFAE (146 aa). GTP contacts are provided by residues 231–236, 250–256, and 275–278; these read NAGKSS, SEEAGTT, and DTAG. Serine 235 and threonine 256 together coordinate Mg(2+). Lysine 442 serves as a coordination point for (6S)-5-formyl-5,6,7,8-tetrahydrofolate.

It belongs to the TRAFAC class TrmE-Era-EngA-EngB-Septin-like GTPase superfamily. TrmE GTPase family. Homodimer. Heterotetramer of two MnmE and two MnmG subunits. K(+) serves as cofactor.

The protein localises to the cytoplasm. Exhibits a very high intrinsic GTPase hydrolysis rate. Involved in the addition of a carboxymethylaminomethyl (cmnm) group at the wobble position (U34) of certain tRNAs, forming tRNA-cmnm(5)s(2)U34. The chain is tRNA modification GTPase MnmE from Brucella abortus (strain 2308).